A 688-amino-acid polypeptide reads, in one-letter code: Elongation factor G (688 aa).

In terms of domain architecture, tr-type G spans 8–282 (EKFRNFGIMA…GVVDYLPSPL (275 aa)). GTP contacts are provided by residues 17–24 (AHIDAGKT), 81–85 (DTPGH), and 135–138 (NKMD).

The protein belongs to the TRAFAC class translation factor GTPase superfamily. Classic translation factor GTPase family. EF-G/EF-2 subfamily.

Its subcellular location is the cytoplasm. Functionally, catalyzes the GTP-dependent ribosomal translocation step during translation elongation. During this step, the ribosome changes from the pre-translocational (PRE) to the post-translocational (POST) state as the newly formed A-site-bound peptidyl-tRNA and P-site-bound deacylated tRNA move to the P and E sites, respectively. Catalyzes the coordinated movement of the two tRNA molecules, the mRNA and conformational changes in the ribosome. This is Elongation factor G from Clostridium perfringens (strain 13 / Type A).